The sequence spans 964 residues: Protein translocase subunit SecA (964 aa).

ATP-binding positions include glutamine 86, 104–108, and aspartate 494; that span reads GEGKT. The interval 846–964 is disordered; that stretch reads ETAESADTIA…YKMCHGQNEA (119 aa). Acidic residues predominate over residues 871–882; that stretch reads AEGEVEEEDEDT. Low complexity predominate over residues 887–900; that stretch reads AIAESAAASEAGES. Zn(2+) is bound by residues cysteine 947, cysteine 949, cysteine 958, and histidine 959.

This sequence belongs to the SecA family. Monomer and homodimer. Part of the essential Sec protein translocation apparatus which comprises SecA, SecYEG and auxiliary proteins SecDF. Other proteins may also be involved. Zn(2+) is required as a cofactor.

It is found in the cell membrane. Its subcellular location is the cytoplasm. The catalysed reaction is ATP + H2O + cellular proteinSide 1 = ADP + phosphate + cellular proteinSide 2.. Functionally, part of the Sec protein translocase complex. Interacts with the SecYEG preprotein conducting channel. Has a central role in coupling the hydrolysis of ATP to the transfer of proteins into and across the cell membrane, serving as an ATP-driven molecular motor driving the stepwise translocation of polypeptide chains across the membrane. This chain is Protein translocase subunit SecA, found in Bifidobacterium longum subsp. infantis (strain ATCC 15697 / DSM 20088 / JCM 1222 / NCTC 11817 / S12).